The following is a 2034-amino-acid chain: Host cell factor 1 (2034 aa).

A2 carries the post-translational modification N-acetylalanine. Phosphoserine is present on S6. Kelch repeat units follow at residues 44 to 89, 93 to 140, 148 to 194, 217 to 265, and 266 to 313; these read LIVV…GFVC, RLLV…RLGH, KCYL…ITYG, KLVI…TIGN, and KMYV…LMDT. Glycyl lysine isopeptide (Lys-Gly) (interchain with G-Cter in ubiquitin) cross-links involve residues K105, K163, and K244. K282 participates in a covalent cross-link: Glycyl lysine isopeptide (Lys-Gly) (interchain with G-Cter in SUMO2). Residue K288 is modified to N6-acetyllysine. Residue K363 forms a Glycyl lysine isopeptide (Lys-Gly) (interchain with G-Cter in ubiquitin) linkage. The Fibronectin type-III 1 domain maps to 366 to 469; the sequence is PPARVQLVRA…TIQVLPTVPG (104 aa). Residues 407–434 form a disordered region; that stretch reads ATATSPTPNPVPSVPANPPKSPAPAAAA. S411 bears the Phosphoserine mark. Residues 413–428 show a composition bias toward pro residues; the sequence is TPNPVPSVPANPPKSP. A required for interaction with OGT region spans residues 500–550; sequence LVTMRPASQAGKAPVTVTSLPASVRMVVPTQSAQGTVIGSNPQMSGMAALA. Residues R504 and R524 each carry the omega-N-methylarginine modification. Phosphoserine is present on residues S598, S666, and S669. Residues 610–722 are interaction with SIN3A; sequence LKTAAAQVGT…KGPLPAGTIL (113 aa). Residues 750–902 form an interaction with ZBTB17 region; that stretch reads ILGISSVSPS…SLAGAGAHST (153 aa). An N6-acetyllysine modification is found at K813. The interaction with GABP2 stretch occupies residues 813 to 912; the sequence is KIITAVPKIA…SASLATPITT (100 aa). 3 HCF repeat repeats span residues 1010–1035, 1072–1097, and 1101–1126; these read TLVC…TVVA, VRVC…ATSN, and QHGC…AMSS. The HCF repeat 4; degenerate repeat unit spans residues 1156 to 1182; the sequence is RAQGTVKPPCQTQQTNMTSTTMTVQAT. Phosphoserine is present on residues S1204 and S1223. 4 disordered regions span residues 1221-1241, 1302-1374, 1444-1477, and 1491-1525; these read GPSS…TYTT, PCET…TTST, TVTS…NITS, and RAVT…QLPP. 2 HCF repeat repeats span residues 1295–1320 and 1323–1348; these read TQVC…SNAG and QRVC…ATSN. Residues 1308 to 1321 show a composition bias toward low complexity; that stretch reads TGTTNTATTSNAGS. One copy of the HCF repeat 7; degenerate repeat lies at 1358–1383; sequence QQPASGHPCETHQTTSTGTTMSVSVG. The stretch at 1423-1448 is one HCF repeat 8 repeat; that stretch reads QRVCSNPPCETHETGTTHTATTVTSN. Residues 1491–1501 are compositionally biased toward low complexity; sequence RAVTTVTQSTP. T1500 is subject to Phosphothreonine. Over residues 1502–1511 the composition is skewed to pro residues; sequence VPGPSVPPPE. Residues S1506 and S1516 each carry the phosphoserine modification. Residues 1693-1723 are a coiled coil; the sequence is IVLTQQELAALVQQQQQLQEAQAQAQQQHHL. S1782 bears the Phosphoserine mark. Fibronectin type-III domains follow at residues 1808–1899 and 1901–2017; these read LPPP…TCLP and FPGA…TSKD. Residues K1818 and K1819 each participate in a glycyl lysine isopeptide (Lys-Gly) (interchain with G-Cter in ubiquitin) cross-link. S1849 carries the phosphoserine modification. A disordered region spans residues 2005–2034; it reads ATQVRWLQETSKDSSGTKPASKRPMSSPEM. K2016 carries the post-translational modification N6-acetyllysine.

In terms of assembly, composed predominantly of six polypeptides ranging from 110 to 150 kDa and a minor 300 kDa polypeptide. The majority of N- and C-terminal cleavage products remain tightly, albeit non-covalently, associated. Interacts with POU2F1, CREB3, ZBTB17, EGR2, E2F4, CREBZF, SP1, GABP2, Sin3 HDAC complex (SIN3A, HDAC1, HDAC2, SUDS3), SAP30, SIN3B and FHL2. Component of a MLL1 complex, composed of at least the core components KMT2A/MLL1, ASH2L, HCFC1, WDR5 and RBBP5, as well as the facultative components BACC1, CHD8, DPY30, E2F6, HCFC2, HSP70, INO80C, KANSL1, LAS1L, MAX, MCRS1, MEN1, MGA, KAT8, PELP1, PHF20, PRP31, RING2, RUVBL1, RUVBL2, SENP3, TAF1, TAF4, TAF6, TAF7, TAF9 and TEX10. Component of a THAP1/THAP3-HCFC1-OGT complex that is required for the regulation of the transcriptional activity of RRM1. Interacts directly with THAP3 (via its HBM). Interacts (via the Kelch-repeat domain) with THAP1 (via the HBM); the interaction recruits HCHC1 to the RRM1. Interacts with THAP7 and THAP11 (via the HMB). Interacts directly with OGT; the interaction, which requires the HCFC1 cleavage site domain, glycosylates and promotes the proteolytic processing of HCFC1, retains OGT in the nucleus and impacts the expression of herpes simplex virus immediate early viral genes. Component of the SET1 complex, at least composed of the catalytic subunit (SETD1A or SETD1B), WDR5, WDR82, RBBP5, ASH2L, CXXC1, HCFC1 and DPY30. Component of the NSL complex at least composed of MOF/KAT8, KANSL1, KANSL2, KANSL3, MCRS1, PHF20, OGT1/OGT, WDR5 and HCFC1. Component of a complex at least composed of ZNF335, HCFC1, CCAR2, EMSY, MKI67, RBBP5, ASH2L and WDR5; the complex is formed as a result of interactions between components of a nuclear receptor-mediated transcription complex and a histone methylation complex. Within the complex interacts with ZNF335. Interacts with TET2 and TET3. Interacts with HCFC1R1. Interacts with THAP11. Interacts (via Kelch domain) with KMT2E/MLL5 isoform 3 (via HBM motif). Interacts with E2F1. Accessory scaffold component of the polycomb repressive deubiquitinase (PR-DUB) complex, at least composed of BAP1, one of ASXL1, ASXL2 or (probably) ASXL3 and one of MBD5 or MBD6; the PR-DUB core associates with a number of accessory proteins, including FOXK1, FOXK2, KDM1B, HCFC1, YY1 and OGT. Interacts with YY1 (via Gly-rich region); the interaction is direct. Interacts with BAP1 (via HBM-like motif). Post-translationally, proteolytically cleaved at one or several PPCE--THET sites within the HCF repeats. Further cleavage of the primary N- and C-terminal chains results in a 'trimming' and accumulation of the smaller chains. Cleavage is promoted by O-glycosylation. In terms of processing, O-glycosylated. GlcNAcylation by OGT promotes proteolytic processing. Ubiquitinated. Lys-1818 and Lys-1819 are ubiquitinated both via 'Lys-48'- and 'Lys-63'-linked polyubiquitin chains. BAP1 mediated deubiquitination of 'Lys-48'-linked polyubiquitin chains; deubiquitination by BAP1 does not seem to stabilize the protein.

It localises to the cytoplasm. It is found in the nucleus. Functionally, transcriptional coregulator. Serves as a scaffold protein, bridging interactions between transcription factors, including THAP11 and ZNF143, and transcriptional coregulators. Involved in control of the cell cycle. Also antagonizes transactivation by ZBTB17 and GABP2; represses ZBTB17 activation of the p15(INK4b) promoter and inhibits its ability to recruit p300. Coactivator for EGR2 and GABP2. Tethers the chromatin modifying Set1/Ash2 histone H3 'Lys-4' methyltransferase (H3K4me) and Sin3 histone deacetylase (HDAC) complexes (involved in the activation and repression of transcription, respectively) together. Component of a THAP1/THAP3-HCFC1-OGT complex that is required for the regulation of the transcriptional activity of RRM1. As part of the NSL complex it may be involved in acetylation of nucleosomal histone H4 on several lysine residues. Recruits KMT2E/MLL5 to E2F1 responsive promoters promoting transcriptional activation and thereby facilitates G1 to S phase transition. Modulates expression of homeobox protein PDX1, perhaps acting in concert with transcription factor E2F1, thereby regulating pancreatic beta-cell growth and glucose-stimulated insulin secretion. May negatively modulate transcriptional activity of FOXO3. In Rattus norvegicus (Rat), this protein is Host cell factor 1.